A 112-amino-acid polypeptide reads, in one-letter code: UPF0375 protein R05A10.4 (112 aa).

The N-terminal stretch at 1–19 (MNLSIFSAIIFSITIASSA) is a signal peptide. N-linked (GlcNAc...) asparagine glycosylation is present at Asn59.

This sequence belongs to the UPF0375 family.

It is found in the secreted. The protein is UPF0375 protein R05A10.4 of Caenorhabditis elegans.